Reading from the N-terminus, the 501-residue chain is Glycerol kinase (501 aa).

T17 is an ADP binding site. Residues T17, T18, and S19 each contribute to the ATP site. Residue T17 participates in sn-glycerol 3-phosphate binding. R21 is a binding site for ADP. Positions 87, 88, 139, and 243 each coordinate sn-glycerol 3-phosphate. Positions 87, 88, 139, 243, and 244 each coordinate glycerol. ADP contacts are provided by T265 and G308. ATP contacts are provided by T265, G308, Q312, and G409. 2 residues coordinate ADP: G409 and N413.

This sequence belongs to the FGGY kinase family.

It carries out the reaction glycerol + ATP = sn-glycerol 3-phosphate + ADP + H(+). The protein operates within polyol metabolism; glycerol degradation via glycerol kinase pathway; sn-glycerol 3-phosphate from glycerol: step 1/1. With respect to regulation, inhibited by fructose 1,6-bisphosphate (FBP). In terms of biological role, key enzyme in the regulation of glycerol uptake and metabolism. Catalyzes the phosphorylation of glycerol to yield sn-glycerol 3-phosphate. This is Glycerol kinase from Pseudomonas syringae pv. tomato (strain ATCC BAA-871 / DC3000).